The chain runs to 795 residues: MKKLLIASLLFGTTTTVFAAPFVAKDIRVDGVQGDLEQQIRASLPVRAGQRVTDNDVANIVRSLFVSGRFDDVKAHQEGDVLVVSVVAKSIISDVKIKGNSIIPTEALKQNLDANGFKVGDVLIREKLNEFAKSVKEHYASVGRYNATVEPIVNTLPNNRAEILIQINEDDKAKLASLTFKGNESVSSSTLQEQMELQPDSWWKLWGNKFEGAQFEKDLQSIRDYYLNNGYAKAQITKTDVQLNDEKTKVNVTIDVNEGLQYDLRSARIIGNLGGMSAELEPLLSALHLNDTFRRSDIADVENAIKAKLGERGYGSATVNSVPDFDDANKTLAITLVVDAGRRLTVRQLRFEGNTVSADSTLRQEMRQQEGTWYNSQLVELGKIRLDRTGFFETVENRIDPINGSNDEVDVVYKVKERNTGSINFGIGYGTESGISYQASVKQDNFLGTGAAVSIAGTKNDYGTSVNLGYTEPYFTKDGVSLGGNVFFENYDNSKSDTSSNYKRTTYGSNVTLGFPVNENNSYYVGLGHTYNKISNFALEYNRNLYIQSMKFKGNGIKTNDFDFSFGWNYNSLNRGYFPTKGVKASLGGRVTIPGSDNKYYKLSADVQGFYPLDRDHLWVVSAKASAGYANGFGNKRLPFYQTYTAGGIGSLRGFAYGSIGPNAIYAEHGNGNGTFKKISSDVIGGNAITTASAELIVPTPFVSDKSQNTVRTSLFVDAASVWNTKWKSDKSGLDNNVLKSLPDYGKSSRIRASTGVGFQWQSPIGPLVFSYAKPIKKYENDDVEQFQFSIGGSF.

The first 19 residues, 1–19 (MKKLLIASLLFGTTTTVFA), serve as a signal peptide directing secretion. POTRA domains follow at residues 22–89 (FVAK…VVAK), 90–170 (SIIS…INED), 173–259 (AKLA…VNEG), 262–341 (YDLR…VDAG), and 344–418 (LTVR…VKER).

The protein belongs to the BamA family. As to quaternary structure, part of the Bam complex.

It is found in the cell outer membrane. Functionally, part of the outer membrane protein assembly complex, which is involved in assembly and insertion of beta-barrel proteins into the outer membrane. In Haemophilus influenzae (strain ATCC 51907 / DSM 11121 / KW20 / Rd), this protein is Outer membrane protein assembly factor BamA.